We begin with the raw amino-acid sequence, 304 residues long: D-alanine--D-alanine ligase (304 aa).

In terms of domain architecture, ATP-grasp spans 103–299; it reads KLIWQALGLP…FADLCIEILK (197 aa). 129-184 serves as a coordination point for ATP; it reads EEKLGLPMFVKPAAEGSSVGVVKVKGKGRLKSVYEELKHLQGEIIAERFIGGGEYS. Mg(2+) is bound by residues D253, E266, and N268.

It belongs to the D-alanine--D-alanine ligase family. Mg(2+) is required as a cofactor. Requires Mn(2+) as cofactor.

The protein resides in the cytoplasm. It catalyses the reaction 2 D-alanine + ATP = D-alanyl-D-alanine + ADP + phosphate + H(+). It participates in cell wall biogenesis; peptidoglycan biosynthesis. Cell wall formation. The sequence is that of D-alanine--D-alanine ligase from Neisseria meningitidis serogroup B (strain ATCC BAA-335 / MC58).